We begin with the raw amino-acid sequence, 489 residues long: Long chain base biosynthesis protein 2b (489 aa).

A helical transmembrane segment spans residues 2–22; sequence ITIPYLTAVSTYFSYGLLFAF. N6-(pyridoxal phosphate)lysine is present on Lys311.

Belongs to the class-II pyridoxal-phosphate-dependent aminotransferase family. Heterodimer with LCB1. Component of the serine palmitoyltransferase (SPT) complex, composed of LCB1 and LCB2 (LCB2a or LCB2b). Pyridoxal 5'-phosphate is required as a cofactor. As to expression, ubiquitous with the highest expression in flowers.

The protein localises to the endoplasmic reticulum membrane. The catalysed reaction is L-serine + hexadecanoyl-CoA + H(+) = 3-oxosphinganine + CO2 + CoA. The protein operates within lipid metabolism; sphingolipid metabolism. In terms of biological role, serine palmitoyltransferase (SPT). The heterodimer formed with LCB1 constitutes the catalytic core. Plays an important role during male gametogenesis and embryogenesis. The protein is Long chain base biosynthesis protein 2b (LCB2b) of Arabidopsis thaliana (Mouse-ear cress).